We begin with the raw amino-acid sequence, 200 residues long: ATP-dependent Clp protease proteolytic subunit 2 (200 aa).

Ser99 serves as the catalytic Nucleophile. His124 is a catalytic residue.

Belongs to the peptidase S14 family. In terms of assembly, fourteen ClpP subunits assemble into 2 heptameric rings which stack back to back to give a disk-like structure with a central cavity, resembling the structure of eukaryotic proteasomes.

The protein resides in the cytoplasm. It carries out the reaction Hydrolysis of proteins to small peptides in the presence of ATP and magnesium. alpha-casein is the usual test substrate. In the absence of ATP, only oligopeptides shorter than five residues are hydrolyzed (such as succinyl-Leu-Tyr-|-NHMec, and Leu-Tyr-Leu-|-Tyr-Trp, in which cleavage of the -Tyr-|-Leu- and -Tyr-|-Trp bonds also occurs).. Cleaves peptides in various proteins in a process that requires ATP hydrolysis. Has a chymotrypsin-like activity. Plays a major role in the degradation of misfolded proteins. This Treponema denticola (strain ATCC 35405 / DSM 14222 / CIP 103919 / JCM 8153 / KCTC 15104) protein is ATP-dependent Clp protease proteolytic subunit 2.